The chain runs to 83 residues: Exodeoxyribonuclease 7 small subunit (83 aa).

Belongs to the XseB family. As to quaternary structure, heterooligomer composed of large and small subunits.

Its subcellular location is the cytoplasm. It carries out the reaction Exonucleolytic cleavage in either 5'- to 3'- or 3'- to 5'-direction to yield nucleoside 5'-phosphates.. Its function is as follows. Bidirectionally degrades single-stranded DNA into large acid-insoluble oligonucleotides, which are then degraded further into small acid-soluble oligonucleotides. This chain is Exodeoxyribonuclease 7 small subunit, found in Brucella melitensis biotype 1 (strain ATCC 23456 / CCUG 17765 / NCTC 10094 / 16M).